Here is a 694-residue protein sequence, read N- to C-terminus: Lon-like protease BrxL (694 aa).

It belongs to the BrxL family.

BREX systems (bacteriophage exclusion) provide immunity against bacteriophage. Part of a type 1 BREX system which protects against dsDNA phage. This system allows phage adsorption but prevents phage DNA replication, without degradation of the phage DNA. Methylation of bacterial DNA by PglX guides self/non-self discrimination. When the brxA-brxB-brxC-pglX-pglZ-brxL genes are transformed into a susceptible E.coli strain (BW25113) they confer very high resistance to infection by bacteriophage VR7 and VpaE1, about 100-fold protection against lambda, T5 and T7 and no protection against RNA phage Qbeta, ssDNA phage M13 or dSDNA phage T4 and VR5. Glycosylated phage DNA is not susceptible to BREX. The BREX system does not confer resistance to lysogenic lambda phage, i.e. prophage that are integrated into the chromosomal DNA and then induced to form phage. Expression of this protein alone is toxic. This chain is Lon-like protease BrxL, found in Escherichia coli O9:H4 (strain HS).